The chain runs to 295 residues: Vesicle-associated protein 4-2 (295 aa).

Residues 1–10 are compositionally biased toward basic and acidic residues; sequence MTMTEEKPTS. The tract at residues 1–99 is disordered; the sequence is MTMTEEKPTS…PSPSVSSVAK (99 aa). Positions 31–53 are enriched in low complexity; that stretch reads NAASSAATSPFPSGASSSSTSSH. Residues 54-71 show a composition bias toward basic residues; it reads LHNHHQHHHQHHHQHHHQ. Residues 83 to 98 are compositionally biased toward polar residues; sequence GQNQHPTPSPSVSSVA. Residues 107-229 enclose the MSP domain; the sequence is RLKLDPSEKL…KEQILRVIFL (123 aa). A compositionally biased stretch (basic and acidic residues) spans 249–263; the sequence is DAAVEARKKPPEETG. A disordered region spans residues 249–270; sequence DAAVEARKKPPEETGPKMIGEG. S294 is subject to Phosphoserine.

This sequence belongs to the VAMP-associated protein (VAP) (TC 9.B.17) family.

In terms of biological role, may play a role in vesicle trafficking. In Arabidopsis thaliana (Mouse-ear cress), this protein is Vesicle-associated protein 4-2 (PVA42).